The sequence spans 448 residues: MREIVHLQTGQCGNQIGAAFWQTISGEHGLDGSGVYNGSSDLQLERMNVYFNEASGNKYVPRAVLVDLEPGTMDAVRAGPFGQLFRPDNFVFGQSGAGNNWAKGHYTEGAELVDQVVDVVRREAEGCDCLQGFQITHSLGGGTGAGMGTLLISKIREEFPDRMMATYSVVPSPKVSDTVVEPYNATLSVHQLVEHSDETFCIDNEALYDICMRTLKLSNPSYGDLNHLVSAVMSGVTTCLRFPGQLNSDLRKLAVNMVPFPRLHFFMVGFAPLTSRGAHSFRAVSVPELTQQMFDPKNMMAASDFRNGRYLTCSAIFRGKVSMKEVEDQMRNIQSKNQTYFVEWIPNNIQTALCSIPPRGLKMSSTFIGNSTSIQELFKRVGDQFTAMFRRKAFLHWYTGEGMDEMEFTEAESNMNDLVSEYQQYQDASISEGEEEYLEEEEPLEHEE.

GTP-binding residues include Q11, E69, S138, G142, T143, G144, N204, and N226. E69 provides a ligand contact to Mg(2+). The segment at 425 to 448 is disordered; sequence YQDASISEGEEEYLEEEEPLEHEE. Residues 432–448 show a composition bias toward acidic residues; that stretch reads EGEEEYLEEEEPLEHEE.

Belongs to the tubulin family. In terms of assembly, dimer of alpha and beta chains. A typical microtubule is a hollow water-filled tube with an outer diameter of 25 nm and an inner diameter of 15 nM. Alpha-beta heterodimers associate head-to-tail to form protofilaments running lengthwise along the microtubule wall with the beta-tubulin subunit facing the microtubule plus end conferring a structural polarity. Microtubules usually have 13 protofilaments but different protofilament numbers can be found in some organisms and specialized cells. It depends on Mg(2+) as a cofactor.

It is found in the cytoplasm. It localises to the cytoskeleton. Its function is as follows. Tubulin is the major constituent of microtubules, a cylinder consisting of laterally associated linear protofilaments composed of alpha- and beta-tubulin heterodimers. Microtubules grow by the addition of GTP-tubulin dimers to the microtubule end, where a stabilizing cap forms. Below the cap, tubulin dimers are in GDP-bound state, owing to GTPase activity of alpha-tubulin. This is Tubulin beta chain from Aspergillus flavus.